A 314-amino-acid chain; its full sequence is Citrate/oxoglutarate carrier protein (314 aa).

Solcar repeat units follow at residues 18–100 (VSFS…EAEY), 107–199 (LNNF…VEDG), and 217–301 (EKIG…AKEF). A run of 5 helical transmembrane segments spans residues 23–44 (ILLG…LEVV), 77–97 (IPWA…VSAE), 111–127 (ASGI…QAYL), 178–198 (VAIR…LVED), and 218–238 (KIGA…IEVI). Residues 246-259 (KEDPNRPKNLTVGK) mediate DNA binding. The helical transmembrane segment at 273-294 (LYRGVTPRIGLGIWQTVFMVGF) threads the bilayer.

The protein belongs to the mitochondrial carrier (TC 2.A.29) family.

It localises to the mitochondrion inner membrane. The protein resides in the mitochondrion matrix. Its subcellular location is the mitochondrion nucleoid. Strongly inhibited by mersalyl, p-chloromercuribenzenesulfonate, mercuric chloride, N-ethylmaleimide, pyridoxal 5'-phosphate, bathophenanthroline, and tannic acid. Partially inhibited by alpha-cyanocinnamate and bromescol purple. Weakly inhibited by butylmalonate and phenylsuccinate. Not inhibited by 1,2,3-benzenetricarboxylate or carboxyatractyloside. In terms of biological role, mitochondrial antiporter which catalyzes the transport of citrate and oxoglutarate across the membrane. Also shows specificity for oxaloacetate, and to a lesser extent succinate and fumarate. Transports isocitrate, cis-aconitate and L-malate with very low efficiency. Does not show uniporter activity. Helps to maintain normal citrate levels and NADPH/NADP(+) ratios under conditions of oxidative stress. In addition, associates with the mitochondrial nucleoid and binds DNA in vitro, although the relevance of these data in vivo is unclear. The sequence is that of Citrate/oxoglutarate carrier protein (YHM2) from Saccharomyces cerevisiae (strain ATCC 204508 / S288c) (Baker's yeast).